A 526-amino-acid chain; its full sequence is Exodeoxyribonuclease 7 large subunit (526 aa).

The interval 497-526 is disordered; the sequence is AMTTEGGTPPGGAKKRSTKPAEPTKQGSLF.

It belongs to the XseA family. In terms of assembly, heterooligomer composed of large and small subunits.

It is found in the cytoplasm. It catalyses the reaction Exonucleolytic cleavage in either 5'- to 3'- or 3'- to 5'-direction to yield nucleoside 5'-phosphates.. Functionally, bidirectionally degrades single-stranded DNA into large acid-insoluble oligonucleotides, which are then degraded further into small acid-soluble oligonucleotides. The protein is Exodeoxyribonuclease 7 large subunit of Rhizobium etli (strain ATCC 51251 / DSM 11541 / JCM 21823 / NBRC 15573 / CFN 42).